A 275-amino-acid polypeptide reads, in one-letter code: Large ribosomal subunit protein uL2 (275 aa).

Residues 225 to 275 (MNPIDHPHGGGEGRTSGGRHPVTPWGKPTKGKKTRSNKKTDRLIMRRRQTQ) are disordered.

It belongs to the universal ribosomal protein uL2 family. Part of the 50S ribosomal subunit. Forms a bridge to the 30S subunit in the 70S ribosome.

In terms of biological role, one of the primary rRNA binding proteins. Required for association of the 30S and 50S subunits to form the 70S ribosome, for tRNA binding and peptide bond formation. It has been suggested to have peptidyltransferase activity; this is somewhat controversial. Makes several contacts with the 16S rRNA in the 70S ribosome. This Paramagnetospirillum magneticum (strain ATCC 700264 / AMB-1) (Magnetospirillum magneticum) protein is Large ribosomal subunit protein uL2.